The following is a 240-amino-acid chain: Urease accessory protein UreF (240 aa).

This sequence belongs to the UreF family. In terms of assembly, ureD, UreF and UreG form a complex that acts as a GTP-hydrolysis-dependent molecular chaperone, activating the urease apoprotein by helping to assemble the nickel containing metallocenter of UreC. The UreE protein probably delivers the nickel.

Its subcellular location is the cytoplasm. Its function is as follows. Required for maturation of urease via the functional incorporation of the urease nickel metallocenter. The sequence is that of Urease accessory protein UreF from Bradyrhizobium sp. (strain ORS 278).